The primary structure comprises 454 residues: uncharacterized protein (454 aa).

The N-terminal stretch at methionine 1–alanine 18 is a signal peptide.

This is an uncharacterized protein from Caenorhabditis elegans.